The sequence spans 331 residues: Methionyl-tRNA formyltransferase (331 aa).

111–114 (SLLP) serves as a coordination point for (6S)-5,6,7,8-tetrahydrofolate.

It belongs to the Fmt family.

The catalysed reaction is L-methionyl-tRNA(fMet) + (6R)-10-formyltetrahydrofolate = N-formyl-L-methionyl-tRNA(fMet) + (6S)-5,6,7,8-tetrahydrofolate + H(+). Attaches a formyl group to the free amino group of methionyl-tRNA(fMet). The formyl group appears to play a dual role in the initiator identity of N-formylmethionyl-tRNA by promoting its recognition by IF2 and preventing the misappropriation of this tRNA by the elongation apparatus. This chain is Methionyl-tRNA formyltransferase, found in Thermosynechococcus vestitus (strain NIES-2133 / IAM M-273 / BP-1).